A 273-amino-acid polypeptide reads, in one-letter code: ALMGHMVNAIYQIDEFVNLGANSIETDVSFDDNANPEYTYHGIPCDCGRSCLKWENYNDFLKGLRSATTPGNSKYQSKLILVVFDLKTGSLYDNQASEAGKKLAKNLLKHYWNNGNNGGRAYIVLSIPDLNHYPLIKGFTDTLKQEGHPELLEKVGYDFSGNDAVGDVAKAYKKAGVSGHVWQSDGITNCLLRGPTRVKEAVANRDSGNGYINKVYYWTVDKRATTRDALDAGVDGVMTNYPDVIADVMNEAAYKNKVRLATYEDSPWVTFKK.

H5 is an active-site residue. Mg(2+)-binding residues include E25 and D27. H41 (nucleophile) is an active-site residue. Disulfide bonds link C45–C51 and C47–C190. D85 is a binding site for Mg(2+).

This sequence belongs to the arthropod phospholipase D family. Class II subfamily. Mg(2+) is required as a cofactor. As to expression, expressed by the venom gland.

It localises to the secreted. The catalysed reaction is an N-(acyl)-sphingosylphosphocholine = an N-(acyl)-sphingosyl-1,3-cyclic phosphate + choline. It catalyses the reaction an N-(acyl)-sphingosylphosphoethanolamine = an N-(acyl)-sphingosyl-1,3-cyclic phosphate + ethanolamine. The enzyme catalyses a 1-acyl-sn-glycero-3-phosphocholine = a 1-acyl-sn-glycero-2,3-cyclic phosphate + choline. It carries out the reaction a 1-acyl-sn-glycero-3-phosphoethanolamine = a 1-acyl-sn-glycero-2,3-cyclic phosphate + ethanolamine. Its function is as follows. Dermonecrotic toxins cleave the phosphodiester linkage between the phosphate and headgroup of certain phospholipids (sphingolipid and lysolipid substrates), forming an alcohol (often choline) and a cyclic phosphate. This toxin acts on sphingomyelin (SM). It may also act on ceramide phosphoethanolamine (CPE), lysophosphatidylcholine (LPC) and lysophosphatidylethanolamine (LPE), but not on lysophosphatidylserine (LPS), and lysophosphatidylglycerol (LPG). It acts by transphosphatidylation, releasing exclusively cyclic phosphate products as second products. Induces dermonecrosis, hemolysis, increased vascular permeability, edema, inflammatory response, and platelet aggregation. The protein is Dermonecrotic toxin LhSicTox-alphaIA2aii of Loxosceles hirsuta (Recluse spider).